Reading from the N-terminus, the 250-residue chain is Methylthioribulose-1-phosphate dehydratase (250 aa).

Cysteine 103 lines the substrate pocket. Positions 121 and 123 each coordinate Zn(2+). The active-site Proton donor/acceptor is glutamate 146. Histidine 211 contributes to the Zn(2+) binding site.

This sequence belongs to the aldolase class II family. MtnB subfamily. Zn(2+) is required as a cofactor.

It localises to the cytoplasm. The catalysed reaction is 5-(methylsulfanyl)-D-ribulose 1-phosphate = 5-methylsulfanyl-2,3-dioxopentyl phosphate + H2O. Its pathway is amino-acid biosynthesis; L-methionine biosynthesis via salvage pathway; L-methionine from S-methyl-5-thio-alpha-D-ribose 1-phosphate: step 2/6. Its function is as follows. Catalyzes the dehydration of methylthioribulose-1-phosphate (MTRu-1-P) into 2,3-diketo-5-methylthiopentyl-1-phosphate (DK-MTP-1-P). The chain is Methylthioribulose-1-phosphate dehydratase from Clavispora lusitaniae (strain ATCC 42720) (Yeast).